The following is a 514-amino-acid chain: Ribonuclease Y (514 aa).

Residues 3-23 (VLWMVLGLAIGIAVGAAAGYI) form a helical membrane-spanning segment. The 64-residue stretch at 203–266 (TVKAVELPSD…EVARIAMERL (64 aa)) folds into the KH domain. Positions 330–423 (VLAHSVEVAN…VATADAVSAA (94 aa)) constitute an HD domain.

Belongs to the RNase Y family.

The protein resides in the cell membrane. Endoribonuclease that initiates mRNA decay. The protein is Ribonuclease Y of Rubrobacter xylanophilus (strain DSM 9941 / JCM 11954 / NBRC 16129 / PRD-1).